A 183-amino-acid chain; its full sequence is Putative 3-methyladenine DNA glycosylase (183 aa).

This sequence belongs to the DNA glycosylase MPG family.

The sequence is that of Putative 3-methyladenine DNA glycosylase from Legionella pneumophila (strain Lens).